A 90-amino-acid polypeptide reads, in one-letter code: Small ribosomal subunit protein bS20 (90 aa).

Belongs to the bacterial ribosomal protein bS20 family.

Its function is as follows. Binds directly to 16S ribosomal RNA. In Francisella philomiragia subsp. philomiragia (strain ATCC 25017 / CCUG 19701 / FSC 153 / O#319-036), this protein is Small ribosomal subunit protein bS20.